We begin with the raw amino-acid sequence, 681 residues long: PAB-dependent poly(A)-specific ribonuclease subunit pan3-like (681 aa).

A C3H1-type zinc finger spans residues 9-38; the sequence is FSTNIPCRNEQLYGRCPYIDKGCFFQHKNQ. 2 disordered regions span residues 38-58 and 82-123; these read QDNAPASSKPPSATAIDPQNS and SSAS…TVSL. The span at 41 to 50 shows a compositional bias: low complexity; it reads APASSKPPSA. Over residues 96–106 the composition is skewed to polar residues; it reads KSYSSALSSGK. At Ser-165 the chain carries Phosphoserine.

This sequence belongs to the protein kinase superfamily. PAN3 family.

It is found in the cytoplasm. In terms of biological role, regulatory subunit of the poly(A)-nuclease (PAN) deadenylation complex. In Schizosaccharomyces pombe (strain 972 / ATCC 24843) (Fission yeast), this protein is PAB-dependent poly(A)-specific ribonuclease subunit pan3-like.